The following is a 311-amino-acid chain: Halocin-S8 (311 aa).

2 propeptides span residues 1–230 (MSDK…IQLQ) and 267–311 (TVAC…TSFW).

The protein localises to the secreted. Its function is as follows. Has antibacterial activity against the haloarchaeons H.salinarium NRC817, Halobacterium GRB and H.gibbonsii. This Haloarchaeon S8a protein is Halocin-S8 (halS8).